Reading from the N-terminus, the 120-residue chain is SPbeta prophage-derived DSR anti-defense 1 (120 aa).

It belongs to the DSR anti-defense 1 family. Interacts with Bacillus subtilis DSR2 (via C-terminus) in a 2:4 ratio; this interaction leads to the absence of activation of the NADase defense activity of DSR2.

Counteracts the defense-associated sirtuin 2 (DSR2) defense system of the host. Inhibits the NADase activity of host DSR2 by competing with the tail tube protein that normally activates DSR2. The chain is SPbeta prophage-derived DSR anti-defense 1 (yotI) from Bacillus subtilis (strain 168).